Reading from the N-terminus, the 320-residue chain is 1-aminocyclopropane-1-carboxylate oxidase 2 (320 aa).

Positions 111–143 (DEYRTAMKDFGKRLENLAEDLLDLLCENLGLEK) form a coiled coil. One can recognise a Fe2OG dioxygenase domain in the interval 156-256 (PTFGTKVSNY…RMSVASFYNP (101 aa)). The Fe cation site is built by His180, Asp182, and His237. 2-oxoglutarate is bound at residue Arg247.

This sequence belongs to the iron/ascorbate-dependent oxidoreductase family. Requires Fe(2+) as cofactor. Cu(2+) is required as a cofactor. As to expression, expressed in vegetative tissues. Constitutively expressed in leaves and blades. In ethylene exposed etiolated seedlings, localized in cells at the outer side of the exaggerated hook in an ethylene-dependent manner and following an ethylene sensitive pattern. Also detected in the root tip when treated by ethylene.

The enzyme catalyses 1-aminocyclopropane-1-carboxylate + L-ascorbate + O2 = ethene + L-dehydroascorbate + hydrogen cyanide + CO2 + 2 H2O. It participates in alkene biosynthesis; ethylene biosynthesis via S-adenosyl-L-methionine; ethylene from S-adenosyl-L-methionine: step 2/2. Functionally, enzyme involved in the ethylene biosynthesis. Required to mediate the 1-aminocyclopropane-1-carboxylic acid (ACC)-mediated reversion of the ABA-induced inhibition of seed germination via endosperm rupture. May promote stem elongation by maximizing the extensibility cells, possibly by activating ethylene biosynthesis, in response to very-long-chain fatty acids (VLCFAs C20:0 to C30:0). The chain is 1-aminocyclopropane-1-carboxylate oxidase 2 (ACO2) from Arabidopsis thaliana (Mouse-ear cress).